The primary structure comprises 345 residues: MTISPQDALTRCIEHREIFHDEMLHLMRLIMRGEMSPVIASALIMGLRVKKETIGEIAAAATVMREFATTVDVPAAILDHFVDIVGTGGDGANTFNISTASMFVAAAAGARIAKHGGRGVSSKSGSADVLEALGVNIMLTPEQVAQSIEAVGIGFMFAPNHHPAMKNVAPIRKELGVRTLFNILGPLTNPAGAPNILMGVFHPDLVGIQVRVMQRLGARHAVVVYGKDGMDEVSLGAATVVGELKDGEVREYEIHPEDYGLQMVSNRGLKVADAEESKAMLLGALENVPGTPREIVTLNAGAALYAANLAGSIGDGITLAREAIASGAARAKVDELVRVTNQFKK.

Residues glycine 86, 89-90 (GD), threonine 94, 96-99 (NIST), 114-122 (KHGGRGVSS), and serine 126 contribute to the 5-phospho-alpha-D-ribose 1-diphosphate site. Glycine 86 lines the anthranilate pocket. Residue serine 98 coordinates Mg(2+). Arginine 172 serves as a coordination point for anthranilate. Positions 231 and 232 each coordinate Mg(2+).

The protein belongs to the anthranilate phosphoribosyltransferase family. As to quaternary structure, homodimer. The cofactor is Mg(2+).

It carries out the reaction N-(5-phospho-beta-D-ribosyl)anthranilate + diphosphate = 5-phospho-alpha-D-ribose 1-diphosphate + anthranilate. It participates in amino-acid biosynthesis; L-tryptophan biosynthesis; L-tryptophan from chorismate: step 2/5. Functionally, catalyzes the transfer of the phosphoribosyl group of 5-phosphorylribose-1-pyrophosphate (PRPP) to anthranilate to yield N-(5'-phosphoribosyl)-anthranilate (PRA). The sequence is that of Anthranilate phosphoribosyltransferase 1 from Ralstonia nicotianae (strain ATCC BAA-1114 / GMI1000) (Ralstonia solanacearum).